A 207-amino-acid chain; its full sequence is Dephospho-CoA kinase (207 aa).

Residues 12 to 207 form the DPCK domain; it reads LIGITGMIGG…LYSTLLGKML (196 aa). Residue 20 to 25 coordinates ATP; it reads GGGKST.

It belongs to the CoaE family.

The protein localises to the cytoplasm. The catalysed reaction is 3'-dephospho-CoA + ATP = ADP + CoA + H(+). The protein operates within cofactor biosynthesis; coenzyme A biosynthesis; CoA from (R)-pantothenate: step 5/5. Its function is as follows. Catalyzes the phosphorylation of the 3'-hydroxyl group of dephosphocoenzyme A to form coenzyme A. The protein is Dephospho-CoA kinase of Leptospira interrogans serogroup Icterohaemorrhagiae serovar Lai (strain 56601).